The primary structure comprises 692 residues: Glycine--tRNA ligase beta subunit (692 aa).

Belongs to the class-II aminoacyl-tRNA synthetase family. Tetramer of two alpha and two beta subunits.

The protein localises to the cytoplasm. It catalyses the reaction tRNA(Gly) + glycine + ATP = glycyl-tRNA(Gly) + AMP + diphosphate. The protein is Glycine--tRNA ligase beta subunit of Limosilactobacillus fermentum (strain NBRC 3956 / LMG 18251) (Lactobacillus fermentum).